Here is a 157-residue protein sequence, read N- to C-terminus: Selenoprotein F (157 aa).

The N-terminal stretch at 1–19 is a signal peptide; it reads MSGEVYILWLLSLIQTLSA. Residue selenocysteine 84 is a non-standard amino acid, selenocysteine.

The protein belongs to the selenoprotein M/F family. In terms of tissue distribution, expressed in the brain, liver and retina. Localized to the retinal ganglion cell layer, the inner nuclear layer and the outer nuclear layer at both parr and smolt stages.

It localises to the endoplasmic reticulum lumen. Its function is as follows. May be involved in redox reactions associated with the formation of disulfide bonds. May contribute to the quality control of protein folding in the endoplasmic reticulum. May be involved in retinal development. The polypeptide is Selenoprotein F (Oncorhynchus mykiss (Rainbow trout)).